We begin with the raw amino-acid sequence, 344 residues long: Anthranilate phosphoribosyltransferase (344 aa).

5-phospho-alpha-D-ribose 1-diphosphate is bound by residues Gly85, 88-89 (GD), Thr93, 95-98 (NIST), 113-121 (KHGNRSVSS), and Ser125. Residue Gly85 participates in anthranilate binding. Ser97 provides a ligand contact to Mg(2+). Asn116 is a binding site for anthranilate. An anthranilate-binding site is contributed by Arg171. Positions 229 and 230 each coordinate Mg(2+).

This sequence belongs to the anthranilate phosphoribosyltransferase family. As to quaternary structure, homodimer. The cofactor is Mg(2+).

It carries out the reaction N-(5-phospho-beta-D-ribosyl)anthranilate + diphosphate = 5-phospho-alpha-D-ribose 1-diphosphate + anthranilate. It participates in amino-acid biosynthesis; L-tryptophan biosynthesis; L-tryptophan from chorismate: step 2/5. Catalyzes the transfer of the phosphoribosyl group of 5-phosphorylribose-1-pyrophosphate (PRPP) to anthranilate to yield N-(5'-phosphoribosyl)-anthranilate (PRA). This is Anthranilate phosphoribosyltransferase from Shewanella amazonensis (strain ATCC BAA-1098 / SB2B).